Here is a 207-residue protein sequence, read N- to C-terminus: Putative 3-methyladenine DNA glycosylase (207 aa).

This sequence belongs to the DNA glycosylase MPG family.

This is Putative 3-methyladenine DNA glycosylase from Listeria monocytogenes serotype 4b (strain CLIP80459).